A 291-amino-acid chain; its full sequence is Bifunctional protein FolD (291 aa).

NADP(+) is bound by residues 165-167, Ser190, and Ile231; that span reads GRS.

It belongs to the tetrahydrofolate dehydrogenase/cyclohydrolase family. As to quaternary structure, homodimer.

It carries out the reaction (6R)-5,10-methylene-5,6,7,8-tetrahydrofolate + NADP(+) = (6R)-5,10-methenyltetrahydrofolate + NADPH. The enzyme catalyses (6R)-5,10-methenyltetrahydrofolate + H2O = (6R)-10-formyltetrahydrofolate + H(+). Its pathway is one-carbon metabolism; tetrahydrofolate interconversion. In terms of biological role, catalyzes the oxidation of 5,10-methylenetetrahydrofolate to 5,10-methenyltetrahydrofolate and then the hydrolysis of 5,10-methenyltetrahydrofolate to 10-formyltetrahydrofolate. The protein is Bifunctional protein FolD of Azoarcus sp. (strain BH72).